The chain runs to 430 residues: Tektin-2 (430 aa).

Coiled-coil stretches lie at residues Lys-80–Leu-162 and Asn-225–Asn-382.

The protein belongs to the tektin family. Microtubule inner protein component of sperm flagellar doublet microtubules. May interact with CCDC172. In terms of processing, tyrosine phosphorylated. Ubiquitinated, leading to its degradation. Deubiquitinated by USP16, promoting its stability. In terms of tissue distribution, expressed at high levels in testis, trachea and fetal lung, and at lower levels in ovary, pituitary, adult lung, fetal brain and fetal kidney.

It localises to the cytoplasm. Its subcellular location is the cytoskeleton. The protein resides in the cilium axoneme. It is found in the flagellum axoneme. The protein localises to the microtubule organizing center. Functionally, microtubule inner protein (MIP) part of the dynein-decorated doublet microtubules (DMTs) in cilia and flagellar axoneme. Plays a key role in the assembly or attachment of the inner dynein arm to microtubules in sperm flagella and tracheal cilia. Forms filamentous polymers in the walls of ciliary and flagellar microtubules. The protein is Tektin-2 of Homo sapiens (Human).